We begin with the raw amino-acid sequence, 253 residues long: Lys-63-specific deubiquitinase BRCC36 (253 aa).

Positions V9 to F145 constitute an MPN domain. Zn(2+) contacts are provided by H94, H96, and D107. Residues H94–D107 carry the JAMM motif motif. Positions E227–K249 form a coiled coil.

The protein belongs to the peptidase M67A family. BRCC36 subfamily. Component of the BRISC complex, at least composed of ABRAXAS2, BRCC3/BRCC36, BABAM2 and BABAM1/NBA1. Within the complex, interacts directly with ABRAXAS2. The heterodimer with ABRAXAS2 assembles into a heterotetramer. The BRISC complex binds polyubiquitin. The cofactor is Zn(2+).

Its subcellular location is the cytoplasm. It is found in the nucleus. It localises to the cytoskeleton. The protein resides in the spindle pole. In terms of biological role, metalloprotease that specifically cleaves 'Lys-63'-linked polyubiquitin chains, leaving the last ubiquitin chain attached to its substrates. Catalytic subunit of the BRISC complex; does not have activity by itself, but needs to be associated into a heterotetramer with ABRAXAS2 for minimal in vitro activity. Plays a role in regulating the onset of apoptosis via its role in modulating 'Lys-63'-linked ubiquitination of target proteins. Required for normal mitotic spindle assembly and microtubule attachment to kinetochores via its role in deubiquitinating spindle assembly factors. This Camponotus floridanus (Florida carpenter ant) protein is Lys-63-specific deubiquitinase BRCC36.